The following is a 234-amino-acid chain: Probable transcriptional regulatory protein PSPPH_2212 (234 aa).

It belongs to the TACO1 family.

It is found in the cytoplasm. The sequence is that of Probable transcriptional regulatory protein PSPPH_2212 from Pseudomonas savastanoi pv. phaseolicola (strain 1448A / Race 6) (Pseudomonas syringae pv. phaseolicola (strain 1448A / Race 6)).